The following is a 684-amino-acid chain: Proprotein convertase subtilisin/kexin type 9 (684 aa).

An N-terminal signal peptide occupies residues 1-28; the sequence is MGTVSSRRLWWPLPLLLLLLLGPPGARA. Residues 29–151 constitute a propeptide that is removed on maturation; the sequence is QEDDDGDYEE…IEEDSSVFAQ (123 aa). Tyrosine 36 carries the post-translational modification Sulfotyrosine. Phosphoserine is present on serine 45. Residues 75–148 form the Inhibitor I9 domain; that stretch reads TYVVVLKDSD…VDYIEEDSSV (74 aa). One can recognise a Peptidase S8 domain in the interval 154-460; it reads PWNLERITPA…GWQLFCRTVW (307 aa). Residues aspartate 185 and histidine 225 each act as charge relay system in the active site. 2 cysteine pairs are disulfide-bonded: cysteine 222–cysteine 254 and cysteine 322–cysteine 357. Residue serine 385 is the Charge relay system of the active site. The tract at residues 451-684 is C-terminal domain; that stretch reads GWQLFCRTVW…AICCRSRHLA (234 aa). 3 disulfide bridges follow: cysteine 456-cysteine 526, cysteine 476-cysteine 525, and cysteine 485-cysteine 508. Asparagine 532 is a glycosylation site (N-linked (GlcNAc...) asparagine). 6 cysteine pairs are disulfide-bonded: cysteine 533-cysteine 600, cysteine 551-cysteine 599, cysteine 561-cysteine 587, cysteine 607-cysteine 678, cysteine 625-cysteine 677, and cysteine 634-cysteine 653.

This sequence belongs to the peptidase S8 family. Monomer. Can self-associate to form dimers and higher multimers which may have increased LDLR degrading activity. The precursor protein but not the mature protein may form multimers. Interacts with APOB, VLDLR, LRP8/APOER2 and BACE1. The full-length immature form (pro-PCSK9) interacts with SCNN1A, SCNN1B and SCNN1G. The pro-PCSK9 form (via C-terminal domain) interacts with LDLR. Interacts (via the C-terminal domain) with ANXA2 (via repeat Annexin 1); the interaction inhibits the degradation of LDLR. It depends on Ca(2+) as a cofactor. Post-translationally, cleavage by furin and PCSK5 generates a truncated inactive protein that is unable to induce LDLR degradation. Undergoes autocatalytic cleavage in the endoplasmic reticulum to release the propeptide from the N-terminus and the cleavage of the propeptide is strictly required for its maturation and activation. The cleaved propeptide however remains associated with the catalytic domain through non-covalent interactions, preventing potential substrates from accessing its active site. As a result, it is secreted from cells as a propeptide-containing, enzymatically inactive protein. In terms of processing, phosphorylation protects the propeptide against proteolysis.

It is found in the cytoplasm. Its subcellular location is the secreted. It localises to the endosome. The protein localises to the lysosome. The protein resides in the cell surface. It is found in the endoplasmic reticulum. Its subcellular location is the golgi apparatus. Its activity is regulated as follows. Its proteolytic activity is autoinhibited by the non-covalent binding of the propeptide to the catalytic domain. Inhibited by EGTA. Functionally, crucial player in the regulation of plasma cholesterol homeostasis. Binds to low-density lipid receptor family members: low density lipoprotein receptor (LDLR), very low density lipoprotein receptor (VLDLR), apolipoprotein E receptor (LRP1/APOER) and apolipoprotein receptor 2 (LRP8/APOER2), and promotes their degradation in intracellular acidic compartments. Acts via a non-proteolytic mechanism to enhance the degradation of the hepatic LDLR through a clathrin LDLRAP1/ARH-mediated pathway. May prevent the recycling of LDLR from endosomes to the cell surface or direct it to lysosomes for degradation. Can induce ubiquitination of LDLR leading to its subsequent degradation. Inhibits intracellular degradation of APOB via the autophagosome/lysosome pathway in a LDLR-independent manner. Involved in the disposal of non-acetylated intermediates of BACE1 in the early secretory pathway. Inhibits epithelial Na(+) channel (ENaC)-mediated Na(+) absorption by reducing ENaC surface expression primarily by increasing its proteasomal degradation. Regulates neuronal apoptosis via modulation of LRP8/APOER2 levels and related anti-apoptotic signaling pathways. The sequence is that of Proprotein convertase subtilisin/kexin type 9 (PCSK9) from Plecturocebus moloch (Dusky titi monkey).